A 158-amino-acid polypeptide reads, in one-letter code: Siroheme decarboxylase beta subunit (158 aa).

Belongs to the Ahb/Nir family. Forms a heterodimer composed of AhbA and AhbB.

It carries out the reaction siroheme + 2 H(+) = 12,18-didecarboxysiroheme + 2 CO2. The protein operates within porphyrin-containing compound metabolism; protoheme biosynthesis. Functionally, involved in siroheme-dependent heme b biosynthesis. Catalyzes the decarboxylation of siroheme into didecarboxysiroheme. This chain is Siroheme decarboxylase beta subunit, found in Oleidesulfovibrio alaskensis (strain ATCC BAA-1058 / DSM 17464 / G20) (Desulfovibrio alaskensis).